The sequence spans 483 residues: UDP-N-acetylmuramyl-tripeptide synthetase (483 aa).

Residue serine 43 coordinates UDP-N-acetyl-alpha-D-muramoyl-L-alanyl-D-glutamate. 116 to 122 (GTKGKTT) contributes to the ATP binding site. Residues 160–161 (TT), serine 187, and arginine 195 each bind UDP-N-acetyl-alpha-D-muramoyl-L-alanyl-D-glutamate. At lysine 229 the chain carries N6-carboxylysine.

It belongs to the MurCDEF family. MurE subfamily. Post-translationally, carboxylation is probably crucial for Mg(2+) binding and, consequently, for the gamma-phosphate positioning of ATP.

Its subcellular location is the cytoplasm. It functions in the pathway cell wall biogenesis; peptidoglycan biosynthesis. Functionally, catalyzes the addition of an amino acid to the nucleotide precursor UDP-N-acetylmuramoyl-L-alanyl-D-glutamate (UMAG) in the biosynthesis of bacterial cell-wall peptidoglycan. The sequence is that of UDP-N-acetylmuramyl-tripeptide synthetase from Lactococcus lactis subsp. cremoris (strain SK11).